A 200-amino-acid polypeptide reads, in one-letter code: uncharacterized protein (200 aa).

The Response regulatory domain maps to 3–119 (RLFIAEDQRM…DLADAIRKCV (117 aa)). Asp54 carries the post-translational modification 4-aspartylphosphate. In terms of domain architecture, HTH luxR-type spans 133-198 (MMRDENPLTV…EAASIAEEKG (66 aa)). Positions 157 to 176 (TKDITLELYLSQGTVRNYIS) form a DNA-binding region, H-T-H motif.

Post-translationally, phosphorylated by YvfT.

Its subcellular location is the cytoplasm. Member of the two-component regulatory system YvfT/YvfU. This is an uncharacterized protein from Bacillus subtilis (strain 168).